A 328-amino-acid chain; its full sequence is uncharacterized protein (328 aa).

An N-terminal signal peptide occupies residues 1–25 (MKLFNFKKLSMLIAGFTLVTSPALA).

The protein belongs to the bacterial solute-binding protein 7 family.

The protein resides in the periplasm. This is an uncharacterized protein from Haemophilus influenzae (strain ATCC 51907 / DSM 11121 / KW20 / Rd).